The primary structure comprises 255 residues: Venom allergen-1 (255 aa).

Residues 1 to 21 (MASHVIVKFITAAILIGSCYA) form the signal peptide. The region spanning 65–210 (LKKHNELRAE…VIKYYLVCNY (146 aa)) is the SCP domain. N-linked (GlcNAc...) asparagine glycans are attached at residues Asn-146 and Asn-209.

Belongs to the CRISP family. Interacts with human LRPPRC; the interaction interrupts association between BECN1 and LRPPRC. Interacts with human CD4. As to quaternary structure, (Microbial infection) Interacts with Zika virus envelope protein E and Zika virus-like particles; the interaction does not affect Zika virus replication in human endothelial cells and keratinocytes. In terms of tissue distribution, saliva (at protein level). Female salivary gland. No or low-level expression in female hemolymph, midgut, Malpighian tubule system and ovary. No or low-level expression in male tissues.

The protein localises to the secreted. It is found in the host endosome. The protein resides in the host mitochondrion. Activates autophagy in human monocytic cells, dendritic cells and macrophages. Promotes activation of human CD4(+) T-cells. Does not affect cytokine expression in human monocytic cells. Functionally, (Microbial infection) Promotes dengue virus type 2 replication in human monocytic cells, dendritic cells and macrophages. Pro-viral properties are linked to BECN1-mediated autophagy activation in the host. Does not directly interact with the purified envelope protein of dengue virus type 2. Its function is as follows. (Microbial infection) Promotes Zika virus replication in human monocytic cells, dendritic cells and macrophages. Facilitates Zika virus transmission from infected mosquitoes to the host in mouse model. Pro-viral properties are linked to BECN1-mediated autophagy activation in the host. Does not affect Zika virus replication in human endothelial cells and keratinocytes. In terms of biological role, (Microbial infection) Promotes Semliki Forest virus replication in human monocytic cells. (Microbial infection) Does not influence Batai virus replication in human monocytic cells. This Aedes aegypti (Yellowfever mosquito) protein is Venom allergen-1.